Reading from the N-terminus, the 362-residue chain is 3-dehydroquinate synthase (362 aa).

Residues Asp-71–Lys-76, Gly-105–Asp-109, Thr-129–Thr-130, Lys-142, Lys-151, and Cys-169–Thr-172 contribute to the NAD(+) site. The Zn(2+) site is built by Glu-184, His-247, and His-264.

It belongs to the sugar phosphate cyclases superfamily. Dehydroquinate synthase family. Co(2+) is required as a cofactor. The cofactor is Zn(2+). NAD(+) serves as cofactor.

It localises to the cytoplasm. The catalysed reaction is 7-phospho-2-dehydro-3-deoxy-D-arabino-heptonate = 3-dehydroquinate + phosphate. The protein operates within metabolic intermediate biosynthesis; chorismate biosynthesis; chorismate from D-erythrose 4-phosphate and phosphoenolpyruvate: step 2/7. In terms of biological role, catalyzes the conversion of 3-deoxy-D-arabino-heptulosonate 7-phosphate (DAHP) to dehydroquinate (DHQ). This Citrobacter koseri (strain ATCC BAA-895 / CDC 4225-83 / SGSC4696) protein is 3-dehydroquinate synthase.